A 167-amino-acid polypeptide reads, in one-letter code: MNIRHQLVQFLNLALVLSSAFMAWKTLSVITNSHSPIVVVLSGSMEPAFQRGDILFLWNRDNHAKVGDVVVYEIKGKSIPIVHRVLREHHNAESKQFLLTKGDNNAVDDLGLYAKKQAYLNQKTDLVGTVKGYLPMVGYITILITENIYFRYTLLGLMGISSLLSNE.

The Cytoplasmic segment spans residues 1-12 (MNIRHQLVQFLN). A helical; Signal-anchor for type II membrane protein transmembrane segment spans residues 13–30 (LALVLSSAFMAWKTLSVI). Over 31 to 167 (TNSHSPIVVV…MGISSLLSNE (137 aa)) the chain is Lumenal. Active-site charge relay system residues include Ser-44, His-83, and Asp-109. Positions 153-164 (TLLGLMGISSLL) are C-terminal short (CTS) helix.

This sequence belongs to the peptidase S26B family. Component of the signal peptidase complex (SPC) composed of a catalytic subunit SEC11 and three accessory subunits SPC1, SPC2 and SPC3. The complex induces a local thinning of the ER membrane which is used to measure the length of the signal peptide (SP) h-region of protein substrates. This ensures the selectivity of the complex towards h-regions shorter than 18-20 amino acids. SPC associates with the translocon complex.

Its subcellular location is the endoplasmic reticulum membrane. It carries out the reaction Cleavage of hydrophobic, N-terminal signal or leader sequences from secreted and periplasmic proteins.. Its function is as follows. Catalytic component of the signal peptidase complex (SPC) which catalyzes the cleavage of N-terminal signal sequences from nascent proteins as they are translocated into the lumen of the endoplasmic reticulum. Specifically cleaves N-terminal signal peptides that contain a hydrophobic alpha-helix (h-region) shorter than 18-20 amino acids. This chain is Signal peptidase complex catalytic subunit SEC11 (SEC11), found in Debaryomyces hansenii (strain ATCC 36239 / CBS 767 / BCRC 21394 / JCM 1990 / NBRC 0083 / IGC 2968) (Yeast).